A 98-amino-acid chain; its full sequence is NADH-ubiquinone oxidoreductase chain 4L (98 aa).

3 helical membrane-spanning segments follow: residues 1-21, 29-49, and 61-81; these read MPLI…GLLM, ALLC…LLAL, and IILL…LVMI.

The protein belongs to the complex I subunit 4L family. Core subunit of respiratory chain NADH dehydrogenase (Complex I) which is composed of 45 different subunits.

Its subcellular location is the mitochondrion inner membrane. The catalysed reaction is a ubiquinone + NADH + 5 H(+)(in) = a ubiquinol + NAD(+) + 4 H(+)(out). Core subunit of the mitochondrial membrane respiratory chain NADH dehydrogenase (Complex I) which catalyzes electron transfer from NADH through the respiratory chain, using ubiquinone as an electron acceptor. Part of the enzyme membrane arm which is embedded in the lipid bilayer and involved in proton translocation. In Kogia breviceps (Pygmy sperm whale), this protein is NADH-ubiquinone oxidoreductase chain 4L (MT-ND4L).